The following is a 189-amino-acid chain: Elongation factor P (189 aa).

Belongs to the elongation factor P family.

The protein localises to the cytoplasm. It participates in protein biosynthesis; polypeptide chain elongation. In terms of biological role, involved in peptide bond synthesis. Stimulates efficient translation and peptide-bond synthesis on native or reconstituted 70S ribosomes in vitro. Probably functions indirectly by altering the affinity of the ribosome for aminoacyl-tRNA, thus increasing their reactivity as acceptors for peptidyl transferase. This Orientia tsutsugamushi (strain Boryong) (Rickettsia tsutsugamushi) protein is Elongation factor P.